A 130-amino-acid polypeptide reads, in one-letter code: MAQVQYYGTGRRKHSVARVRLVPGDGNIVINGRSLDEYFGLETLKLIVKQPLVETGTEGQYDVRVNVDGGGFTGQAGAIRHGIARALLQVDPEYRPSLKSAGFLTRDARMKERKKYGLKAARRAPQFSKR.

This sequence belongs to the universal ribosomal protein uS9 family.

This Halalkalibacterium halodurans (strain ATCC BAA-125 / DSM 18197 / FERM 7344 / JCM 9153 / C-125) (Bacillus halodurans) protein is Small ribosomal subunit protein uS9.